The chain runs to 639 residues: Mediator of RNA polymerase II transcription subunit 17 (639 aa).

A compositionally biased stretch (polar residues) spans 32-43 (ASATVTTNGTTA). Disordered regions lie at residues 32-68 (ASAT…EEHS) and 130-159 (MGDA…NNDS). The span at 48–57 (DSGSQQSVSS) shows a compositional bias: low complexity. Positions 58-68 (APIQQNSEEHS) are enriched in polar residues. A coiled-coil region spans residues 245–271 (WKLRSLEDSKALLKENYAKLQKSLEVE).

Belongs to the Mediator complex subunit 17 family. In terms of assembly, component of the Mediator complex.

It is found in the nucleus. In terms of biological role, component of the Mediator complex, a coactivator involved in the regulated transcription of nearly all RNA polymerase II-dependent genes. Mediator functions as a bridge to convey information from gene-specific regulatory proteins to the basal RNA polymerase II transcription machinery. Mediator is recruited to promoters by direct interactions with regulatory proteins and serves as a scaffold for the assembly of a functional preinitiation complex with RNA polymerase II and the general transcription factors. This Eremothecium gossypii (strain ATCC 10895 / CBS 109.51 / FGSC 9923 / NRRL Y-1056) (Yeast) protein is Mediator of RNA polymerase II transcription subunit 17 (SRB4).